Here is a 129-residue protein sequence, read N- to C-terminus: Protachykinin-1 (129 aa).

The N-terminal stretch at 1 to 19 (MKILVALAVFFLVSTQLFA) is a signal peptide. The propeptide occupies 20 to 56 (EEIGANDDLNYWSDWYDSDQIKEELPEPFEHLLQRIA). Methionine amide occurs at positions 68 and 107.

It belongs to the tachykinin family. The substance P form is cleaved at Pro-59 by the prolyl endopeptidase FAP (seprase) activity (in vitro). Substance P is also cleaved and degraded by Angiotensin-converting enzyme (ACE) and neprilysin (MME).

The protein resides in the secreted. Functionally, tachykinins are active peptides which excite neurons, evoke behavioral responses, are potent vasodilators and secretagogues, and contract (directly or indirectly) many smooth muscles. The protein is Protachykinin-1 (TAC1) of Homo sapiens (Human).